Consider the following 267-residue polypeptide: Large ribosomal subunit protein uL4 (267 aa).

This sequence belongs to the universal ribosomal protein uL4 family. As to quaternary structure, part of the 50S ribosomal subunit.

One of the primary rRNA binding proteins, this protein initially binds near the 5'-end of the 23S rRNA. It is important during the early stages of 50S assembly. It makes multiple contacts with different domains of the 23S rRNA in the assembled 50S subunit and ribosome. In terms of biological role, forms part of the polypeptide exit tunnel. This Saccharolobus solfataricus (strain ATCC 35092 / DSM 1617 / JCM 11322 / P2) (Sulfolobus solfataricus) protein is Large ribosomal subunit protein uL4.